The chain runs to 80 residues: Cell division protein ZapB (80 aa).

A coiled-coil region spans residues 3-80 (FEVFEKLEAK…ALLGKMNEVN (78 aa)).

It belongs to the ZapB family. In terms of assembly, homodimer. The ends of the coiled-coil dimer bind to each other, forming polymers. Interacts with FtsZ.

It is found in the cytoplasm. Its function is as follows. Non-essential, abundant cell division factor that is required for proper Z-ring formation. It is recruited early to the divisome by direct interaction with FtsZ, stimulating Z-ring assembly and thereby promoting cell division earlier in the cell cycle. Its recruitment to the Z-ring requires functional FtsA or ZipA. In Edwardsiella ictaluri (strain 93-146), this protein is Cell division protein ZapB.